Reading from the N-terminus, the 321-residue chain is Ribose-phosphate pyrophosphokinase 1 (321 aa).

Positions 131, 133, 142, and 146 each coordinate Mg(2+).

It belongs to the ribose-phosphate pyrophosphokinase family.

It catalyses the reaction D-ribose 5-phosphate + ATP = 5-phospho-alpha-D-ribose 1-diphosphate + AMP + H(+). The sequence is that of Ribose-phosphate pyrophosphokinase 1 (PRS1) from Candida albicans (Yeast).